Reading from the N-terminus, the 865-residue chain is DNA mismatch repair protein MutS (865 aa).

609–616 is a binding site for ATP; sequence GPNMAGKS.

Belongs to the DNA mismatch repair MutS family.

Its function is as follows. This protein is involved in the repair of mismatches in DNA. It is possible that it carries out the mismatch recognition step. This protein has a weak ATPase activity. The sequence is that of DNA mismatch repair protein MutS from Leuconostoc citreum (strain KM20).